Consider the following 456-residue polypeptide: Dothistromin biosynthesis regulatory protein aflJ (456 aa).

Residues 74 to 143 (LARENQLLAC…PKPGYVAHSG (70 aa)) form the HTH iclR-type domain. Residues 104 to 123 (YSDVADLACVPVDQLRRIAR) constitute a DNA-binding region (H-T-H motif). The span at 290–300 (KLHNGLSTPPE) shows a compositional bias: polar residues. The tract at residues 290-314 (KLHNGLSTPPESDTGPAARAAKASE) is disordered.

The protein resides in the nucleus. In terms of biological role, transcription coactivator involved in regulation of the dothistromin biosynthesis gene cluster with aflR. The polypeptide is Dothistromin biosynthesis regulatory protein aflJ (Dothistroma septosporum (strain NZE10 / CBS 128990) (Red band needle blight fungus)).